The primary structure comprises 640 residues: Endoglucanase 2 (640 aa).

Residues 1–34 (MARGGGAAGVSMAHHLGIALVVLVFAAMAQVARG) form the signal peptide. Aspartate 93 acts as the Nucleophile in catalysis. Catalysis depends on residues histidine 428, aspartate 480, and glutamate 489. The propeptide at 512 to 640 (RARGRLGQSL…DVWVTGYKLV (129 aa)) is removed in mature form. Asparagine 528 carries an N-linked (GlcNAc...) asparagine glycan.

The protein belongs to the glycosyl hydrolase 9 (cellulase E) family. Expressed in roots and flowers.

It is found in the secreted. The enzyme catalyses Endohydrolysis of (1-&gt;4)-beta-D-glucosidic linkages in cellulose, lichenin and cereal beta-D-glucans.. In terms of biological role, hydrolyzes 1,4-beta-glycosyl linkages of 1,4-beta-glucans and 1,3-1,4-beta-glucans. Possesses broad substrate specificity for hemicelluloses of type II cell walls. Substrate preference is carboxymethyl-cellulose &gt; 1,3-1,4-beta-glucan &gt; lichenan &gt; arabinoxylan &gt; phospho-swollen cellulose &gt; xylan &gt; glucomannan. May participate in lateral root development. The chain is Endoglucanase 2 (GLU5) from Oryza sativa subsp. japonica (Rice).